Here is a 102-residue protein sequence, read N- to C-terminus: NADH-quinone oxidoreductase subunit K (102 aa).

Helical transmembrane passes span 6–26, 30–50, and 63–83; these read LIAM…GVLA, IMFQ…GFVA, and MFIL…ALFL.

It belongs to the complex I subunit 4L family. In terms of assembly, NDH-1 is composed of 14 different subunits. Subunits NuoA, H, J, K, L, M, N constitute the membrane sector of the complex.

Its subcellular location is the cell inner membrane. It catalyses the reaction a quinone + NADH + 5 H(+)(in) = a quinol + NAD(+) + 4 H(+)(out). Functionally, NDH-1 shuttles electrons from NADH, via FMN and iron-sulfur (Fe-S) centers, to quinones in the respiratory chain. The immediate electron acceptor for the enzyme in this species is believed to be ubiquinone. Couples the redox reaction to proton translocation (for every two electrons transferred, four hydrogen ions are translocated across the cytoplasmic membrane), and thus conserves the redox energy in a proton gradient. The sequence is that of NADH-quinone oxidoreductase subunit K from Rhodopseudomonas palustris (strain BisB5).